The following is a 698-amino-acid chain: Superoxide-generating NADPH oxidase heavy chain subunit B (698 aa).

2 disordered regions span residues 1 to 68 and 134 to 158; these read MNEK…NITP and NDQVNSNTDNNNNTNNNNNTNNNKN. The Cytoplasmic segment spans residues 1–184; it reads MNEKKELQQE…KIRGWWWHRG (184 aa). 2 stretches are compositionally biased toward polar residues: residues 16 to 25 and 33 to 53; these read FQTPKNQQLE and EISSTGNETSESGISSPPISQ. Composition is skewed to low complexity over residues 54 to 65 and 138 to 156; these read NDNSNNENESLN and NSNTDNNNNTNNNNNTNNN. A helical transmembrane segment spans residues 185–205; it reads ISTYIMLFYIALNIGVGVHMF. Residues 206–229 are Extracellular-facing; that stretch reads YNMYHSDIFKFLGLSFCFSRTAAR. In terms of domain architecture, Ferric oxidoreductase spans 225–375; the sequence is RTAARLINLN…LFIPFYILLC (151 aa). Residues 230 to 250 traverse the membrane as a helical segment; the sequence is LINLNSAVILLPVLRNFLSWL. The Cytoplasmic segment spans residues 251-269; that stretch reads RGTIVNNYIPIDKHLNFHK. The heme site is built by His268 and His282. Residues 270–290 traverse the membrane as a helical segment; that stretch reads LCAFMLFCCTIIHCVGHYISF. Residues 291-324 are Extracellular-facing; it reads KKINDDVLKIDDGKSVAGDYLNININNFPDEKYL. The helical transmembrane segment at 325–345 threads the bilayer; the sequence is FFKSVPGITGHIMLLILILIV. The Cytoplasmic segment spans residues 346 to 355; the sequence is SSSMWRIRRP. The helical transmembrane segment at 356–376 threads the bilayer; the sequence is MFEIFWYVHHLFIPFYILLCF. Positions 364 and 377 each coordinate heme. Over 377–388 the chain is Extracellular; the sequence is HGYSKILKKDPQ. A helical membrane pass occupies residues 389-409; the sequence is SWMWIIAPFILYSIERLIRIA. Residues 404 to 528 enclose the FAD-binding FR-type domain; sequence RLIRIARSKK…DGPFGAPAEN (125 aa). Residues 410–698 are Cytoplasmic-facing; it reads RSKKRVILEK…CHLIFHKENF (289 aa). FAD is bound at residue 460 to 466; the sequence is HPFTITS.

In terms of assembly, composed of a heavy chain and a light chain. Requires FAD as cofactor.

The protein resides in the membrane. In terms of biological role, critical component of the membrane-bound oxidase that generates superoxide. It is the terminal component of a respiratory chain that transfers single electrons from cytoplasmic NADPH across the plasma membrane to molecular oxygen on the exterior. This is Superoxide-generating NADPH oxidase heavy chain subunit B (noxB) from Dictyostelium discoideum (Social amoeba).